The following is a 364-amino-acid chain: MANKTILFNKHLESNAKMVDFHGWDMPLNYGSQIEEHHAVRQDAGMFDVSHMTVVDVIGTDACAFLRKLLANDVARLKVPGKALYSGMLDENAGIIDDLITYYLTDTFYRVVVNSATREKDLAWIAKQSQGFDITVTERPELAMIAVQGPNAKAKAAAVFSADQNAAIEGMKPFFGKQAGSLFIATTGYTGEAGYEIIVPEDEAQALWQALLDQGVKPCGLGARDTLRLEAGMNLYGLDMDETINPLAANMGWTIAWEPTDRDFIGRKALEALRDAGTDKLVGLVMEEKGVLRHDMPVFFTDAAGVEHQGVITSGTFSPTLGYSIAMARVPNQIGDTAEVEMRKKRVAVRVVAPNFVRNGKQAF.

This sequence belongs to the GcvT family. The glycine cleavage system is composed of four proteins: P, T, L and H.

It catalyses the reaction N(6)-[(R)-S(8)-aminomethyldihydrolipoyl]-L-lysyl-[protein] + (6S)-5,6,7,8-tetrahydrofolate = N(6)-[(R)-dihydrolipoyl]-L-lysyl-[protein] + (6R)-5,10-methylene-5,6,7,8-tetrahydrofolate + NH4(+). Its function is as follows. The glycine cleavage system catalyzes the degradation of glycine. The chain is Aminomethyltransferase from Shewanella putrefaciens (strain CN-32 / ATCC BAA-453).